We begin with the raw amino-acid sequence, 486 residues long: MTKRLSDLFNRPFATDPVIAGVTADSRKVTTGWLFAALPGTKVDGRDFAEGAVAKGAAAILAPEGGLEGLGVPVVRSEDARRAYALAAAAFWGKQPAMCVAVTGTNGKTSVAGFCRQIFTKLGHKAASMGTLGVVVSQPGQPDQQLTPPGLTTPDAGDVAEMIARLADMGVTHLALEASSHGVDQRRIDGVKLSAAGFTNFTQDHLDYHGSMEAYRAAKLRLFDTLTPAGAMAVLNADSEAFPDFAAAAVTSGQSVFSVGEEGQGLRLLSRTPTPAGQDLVVEAEGVVHHLKLPLAGAFQASNVLVAAGLCIAAGEDSAKVLKALETLEGAAGRLQRVGRGPKGGEAYVDYAHTPDGLQTVLEALRPHTAGKLIAVFGAGGDRDRGKRPLMGAIGAKLADIAIVTDDNPRSEDPASIRAAILEAAPGAREIGDRRAAIRAAVALMSEGDVLVVAGKGHEQGQIVAGVVHPFDDVAETLQALEGVDA.

S26 serves as a coordination point for UDP-N-acetyl-alpha-D-muramoyl-L-alanyl-D-glutamate. 104 to 110 (GTNGKTS) contributes to the ATP binding site. Residues 152 to 153 (TT), S179, Q185, and R187 each bind UDP-N-acetyl-alpha-D-muramoyl-L-alanyl-D-glutamate. N6-carboxylysine is present on K219. Residues R383, 407 to 410 (DNPR), G455, and E459 each bind meso-2,6-diaminopimelate. A Meso-diaminopimelate recognition motif motif is present at residues 407-410 (DNPR).

This sequence belongs to the MurCDEF family. MurE subfamily. Mg(2+) is required as a cofactor. Carboxylation is probably crucial for Mg(2+) binding and, consequently, for the gamma-phosphate positioning of ATP.

The protein resides in the cytoplasm. It catalyses the reaction UDP-N-acetyl-alpha-D-muramoyl-L-alanyl-D-glutamate + meso-2,6-diaminopimelate + ATP = UDP-N-acetyl-alpha-D-muramoyl-L-alanyl-gamma-D-glutamyl-meso-2,6-diaminopimelate + ADP + phosphate + H(+). It functions in the pathway cell wall biogenesis; peptidoglycan biosynthesis. Catalyzes the addition of meso-diaminopimelic acid to the nucleotide precursor UDP-N-acetylmuramoyl-L-alanyl-D-glutamate (UMAG) in the biosynthesis of bacterial cell-wall peptidoglycan. The sequence is that of UDP-N-acetylmuramoyl-L-alanyl-D-glutamate--2,6-diaminopimelate ligase from Caulobacter vibrioides (strain ATCC 19089 / CIP 103742 / CB 15) (Caulobacter crescentus).